The chain runs to 445 residues: MASKLKTFINLRDYPITLFNQIRSLSSRILTPINQSHYRKRILLANLLQRYGFPPSSLQHFLSRNNHLLNSDLVETEISLGILLSLKIPQKSLVSLISDCPNVLRSEFLRKWRVPLSNCGKHGVVSSSAIKSVLEHSSRIGIGPDKFNECVRVLKSLGFCDSTVSRILSSFPGVLLVNEIEIRRKIEFLVGIGIARDNIERFFHVFPEVLGIGTETRLKPLLDEFMKMGFSKDDVKKEIAREPRVLGLELGELPRCLELINTLKCREVIRVSIISEGAFRAGFEVKLRVDCLCKYGLIRRDAFKVVWKEPRVILYEIEDIEKKIEFLTNRMGFHINCLADVPEYLGVNLQKQIVPRYNVIDYLKLKGGLGCDIGLKGLIKPSMKRFYNLYVMPYPECERIFGKRKENVRVNKRHPAGLWKLMKPPSNLTTKEDVQNMKSFIESLA.

The N-terminal 25 residues, 1–25, are a transit peptide targeting the mitochondrion; the sequence is MASKLKTFINLRDYPITLFNQIRSL.

It belongs to the mTERF family.

The protein localises to the mitochondrion. Functionally, transcription termination factor required for mitochondrial NAD2 intron 3 splicing and normal membrane respiratory chain Complex I activity. Essential for normal plant growth and development. Binds to RNA but not to double-stranded DNA. In Arabidopsis thaliana (Mouse-ear cress), this protein is Transcription termination factor MTERF15, mitochondrial.